We begin with the raw amino-acid sequence, 304 residues long: Lipoyl synthase (304 aa).

Cysteine 41, cysteine 46, cysteine 52, cysteine 68, cysteine 72, cysteine 75, and serine 281 together coordinate [4Fe-4S] cluster. Positions 54–270 constitute a Radical SAM core domain; sequence GARRTATFMI…RKIAMEKGFK (217 aa). A disordered region spans residues 282-304; that stretch reads YHADEQVNEAAKEKQRQGEEQLN.

This sequence belongs to the radical SAM superfamily. Lipoyl synthase family. Requires [4Fe-4S] cluster as cofactor.

The protein localises to the cytoplasm. It carries out the reaction [[Fe-S] cluster scaffold protein carrying a second [4Fe-4S](2+) cluster] + N(6)-octanoyl-L-lysyl-[protein] + 2 oxidized [2Fe-2S]-[ferredoxin] + 2 S-adenosyl-L-methionine + 4 H(+) = [[Fe-S] cluster scaffold protein] + N(6)-[(R)-dihydrolipoyl]-L-lysyl-[protein] + 4 Fe(3+) + 2 hydrogen sulfide + 2 5'-deoxyadenosine + 2 L-methionine + 2 reduced [2Fe-2S]-[ferredoxin]. It participates in protein modification; protein lipoylation via endogenous pathway; protein N(6)-(lipoyl)lysine from octanoyl-[acyl-carrier-protein]. Functionally, catalyzes the radical-mediated insertion of two sulfur atoms into the C-6 and C-8 positions of the octanoyl moiety bound to the lipoyl domains of lipoate-dependent enzymes, thereby converting the octanoylated domains into lipoylated derivatives. The chain is Lipoyl synthase from Staphylococcus epidermidis (strain ATCC 35984 / DSM 28319 / BCRC 17069 / CCUG 31568 / BM 3577 / RP62A).